A 180-amino-acid chain; its full sequence is 5'(3')-deoxyribonucleotidase (180 aa).

Residue aspartate 9 is the Nucleophile of the active site. Residues aspartate 9, aspartate 11, and aspartate 134 each coordinate Mg(2+). Aspartate 11 functions as the Proton donor in the catalytic mechanism.

The protein belongs to the 5'(3')-deoxyribonucleotidase family. It depends on Mg(2+) as a cofactor.

Functionally, dephosphorylates nucleoside monophosphates such as the 5' and 2'(3')-phosphates of deoxyribonucleotides in vitro. In Clostridium acetobutylicum (strain ATCC 824 / DSM 792 / JCM 1419 / IAM 19013 / LMG 5710 / NBRC 13948 / NRRL B-527 / VKM B-1787 / 2291 / W), this protein is 5'(3')-deoxyribonucleotidase.